A 117-amino-acid chain; its full sequence is Large ribosomal subunit protein uL22 (117 aa).

Belongs to the universal ribosomal protein uL22 family. As to quaternary structure, part of the 50S ribosomal subunit.

In terms of biological role, this protein binds specifically to 23S rRNA; its binding is stimulated by other ribosomal proteins, e.g. L4, L17, and L20. It is important during the early stages of 50S assembly. It makes multiple contacts with different domains of the 23S rRNA in the assembled 50S subunit and ribosome. The globular domain of the protein is located near the polypeptide exit tunnel on the outside of the subunit, while an extended beta-hairpin is found that lines the wall of the exit tunnel in the center of the 70S ribosome. The polypeptide is Large ribosomal subunit protein uL22 (Lacticaseibacillus casei (strain BL23) (Lactobacillus casei)).